Consider the following 221-residue polypeptide: Probable molybdenum cofactor guanylyltransferase (221 aa).

Residues 17–19 (LAG), K29, D74, and D103 contribute to the GTP site. D103 serves as a coordination point for Mg(2+).

It belongs to the MobA family. Requires Mg(2+) as cofactor.

The protein localises to the cytoplasm. The catalysed reaction is Mo-molybdopterin + GTP + H(+) = Mo-molybdopterin guanine dinucleotide + diphosphate. In terms of biological role, transfers a GMP moiety from GTP to Mo-molybdopterin (Mo-MPT) cofactor (Moco or molybdenum cofactor) to form Mo-molybdopterin guanine dinucleotide (Mo-MGD) cofactor. This is Probable molybdenum cofactor guanylyltransferase from Peptoclostridium acidaminophilum (Eubacterium acidaminophilum).